We begin with the raw amino-acid sequence, 247 residues long: Protein LIFEGUARD 4 (247 aa).

7 helical membrane-spanning segments follow: residues 42-62 (VYSI…TVVF), 75-95 (AGLA…CPLY), 105-125 (YLLL…TCAF), 130-150 (VILE…VYTF), 165-185 (FLFG…FFPL), 188-208 (ISVM…IVYD), and 222-242 (IWAA…LLTI).

It belongs to the BI1 family.

The protein resides in the membrane. In Arabidopsis thaliana (Mouse-ear cress), this protein is Protein LIFEGUARD 4.